A 292-amino-acid chain; its full sequence is Light-independent protochlorophyllide reductase iron-sulfur ATP-binding protein (292 aa).

ATP-binding positions include 10 to 15 (GIGKST) and Lys-39. Ser-14 contacts Mg(2+). Residue Cys-95 coordinates [4Fe-4S] cluster. 182–183 (NR) provides a ligand contact to ATP.

The protein belongs to the NifH/BchL/ChlL family. As to quaternary structure, homodimer. Protochlorophyllide reductase is composed of three subunits; ChlL, ChlN and ChlB. Requires [4Fe-4S] cluster as cofactor.

It is found in the plastid. The protein localises to the chloroplast. It carries out the reaction chlorophyllide a + oxidized 2[4Fe-4S]-[ferredoxin] + 2 ADP + 2 phosphate = protochlorophyllide a + reduced 2[4Fe-4S]-[ferredoxin] + 2 ATP + 2 H2O. It functions in the pathway porphyrin-containing compound metabolism; chlorophyll biosynthesis (light-independent). Its function is as follows. Component of the dark-operative protochlorophyllide reductase (DPOR) that uses Mg-ATP and reduced ferredoxin to reduce ring D of protochlorophyllide (Pchlide) to form chlorophyllide a (Chlide). This reaction is light-independent. The L component serves as a unique electron donor to the NB-component of the complex, and binds Mg-ATP. This Huperzia lucidula (Shining clubmoss) protein is Light-independent protochlorophyllide reductase iron-sulfur ATP-binding protein.